The following is a 314-amino-acid chain: MVFRSPLELYPTHFFLPNFAADPHHRSLLLASGGSGSGSGCSPGAGGGGGSSRAPHEELSMFQLPTLNFSPEQVASVCETLEETGDIERLGRFLWSLPVAPGACEAINKHESILRARAVVAFHTGNFRDLYHILENHKFTKESHGKLQAMWLEAHYQEAEKLRGRPLGPVDKYRVRKKFPLPRTIWDGEQKTHCFKERTRSLLREWYLQDPYPNPSKKRELAQATGLTPTQVGNWFKNRRQRDRAAAAKNRLQHQAIGQSGMRSLAEPGCPTHSSAESPSTAASPTTSVSSLTERAETGTSILSVTSSDSECDV.

A DNA-binding region (homeobox) is located at residues 188 to 247 (GEQKTHCFKERTRSLLREWYLQDPYPNPSKKRELAQATGLTPTQVGNWFKNRRQRDRAAA). Disordered regions lie at residues 214-233 (NPSK…TQVG) and 240-314 (RQRD…ECDV). Residues 271–293 (PTHSSAESPSTAASPTTSVSSLT) show a composition bias toward low complexity. The segment covering 298–314 (TGTSILSVTSSDSECDV) has biased composition (polar residues).

This sequence belongs to the SIX/Sine oculis homeobox family.

It is found in the nucleus. Functionally, transcriptional regulator which can act as both a transcriptional repressor and activator by binding a ATTA homeodomain core recognition sequence on these target genes. During forebrain development represses WNT1 expression allowing zona limitans intrathalamica formation and thereby ensuring proper anterio-posterior patterning of the diencephalon and formation of the rostral diencephalon. Acts as a direct upstream activator of SHH expression in the rostral diencephalon ventral midline and that in turn SHH maintains its expression. In addition, Six3 activity is required for the formation of the telencephalon. During postnatal stages of brain development is necessary for ependymal cell maturation by promoting the maturation of radial glia into ependymal cells through regulation of neuroblast proliferation and migration. Acts on the proliferation and differentiation of neural progenitor cells through activating transcription of CCND1 and CCND2. During early lens formation plays a role in lens induction and specification by activating directly PAX6 in the presumptive lens ectoderm. In turn PAX6 activates SIX3 resulting in activation of PDGFRA and CCND1 promoting cell proliferation. Also is required for the neuroretina development by directly suppressing WNT8B expression in the anterior neural plate territory. Its action during retina development and lens morphogenesis is AES and TLE4-dependent manner. Furthermore, during eye development regulates several genes expression. Before and during early lens development represses the CRYGF promoter by binding a SIX repressor element. Directly activates RHO transcription, or cooperates with CRX or NRL. Six3 also functions in the formation of the proximodistal axis of the optic cup, and promotes the formation of optic vesicles-like structures. During pituitary development, acts in parallel or alternatively with HESX1 to control cell proliferation through Wnt/beta-catenin pathway. Plays a role in eye development by suppressing WNT1 expression and in dorsal-ventral patterning by repressing BMP signaling pathway. The sequence is that of Homeobox protein SIX3 (SIX3) from Gallus gallus (Chicken).